A 341-amino-acid chain; its full sequence is Cysteine and histidine-rich domain-containing protein 1 (341 aa).

Cys-5, Cys-10, Cys-24, His-27, Cys-42, Cys-43, Cys-59, His-64, Cys-155, Cys-160, Cys-174, His-177, Cys-192, Cys-193, Cys-209, and His-214 together coordinate Zn(2+). 2 consecutive CHORD domains span residues 5–64 (CYNK…KGPH) and 155–214 (CKNG…RGKH). The disordered stretch occupies residues 61–81 (KGPHNQEKPAEPVKPEVKSSL). Positions 64 to 81 (HNQEKPAEPVKPEVKSSL) are enriched in basic and acidic residues. In terms of domain architecture, CS spans 225–314 (VVPCRFDWHQ…AEPMSWARLD (90 aa)). A disordered region spans residues 313 to 341 (LDLPPVAPPKEKEKEKDVDSEDECDDDED). Positions 330 to 341 (VDSEDECDDDED) are enriched in acidic residues.

Regulates centrosome duplication. This is Cysteine and histidine-rich domain-containing protein 1 (chordc1) from Danio rerio (Zebrafish).